An 86-amino-acid chain; its full sequence is Cytochrome c oxidase subunit 6B1 (86 aa).

Position 2 is an N-acetylalanine (alanine 2). The region spanning 27-73 (TRNCWQNYLDFHRCEKAMTAKGGDVSVCEWYRRVYKSLCPISWVSTW) is the CHCH domain. The Cx9C motif motif lies at 30-40 (CWQNYLDFHRC). Cystine bridges form between cysteine 30–cysteine 65 and cysteine 40–cysteine 54. The Cx10C motif motif lies at 54–65 (CEWYRRVYKSLC). At lysine 62 the chain carries N6-acetyllysine.

This sequence belongs to the cytochrome c oxidase subunit 6B family. As to quaternary structure, component of the cytochrome c oxidase (complex IV, CIV), a multisubunit enzyme composed of 14 subunits. The complex is composed of a catalytic core of 3 subunits MT-CO1, MT-CO2 and MT-CO3, encoded in the mitochondrial DNA, and 11 supernumerary subunits COX4I1 (or COX4I2), COX5A, COX5B, COX6A2 (or COX6A1), COX6B1 (or COX6B2), COX6C, COX7A1 (or COX7A2), COX7B, COX7C, COX8B and NDUFA4, which are encoded in the nuclear genome. The complex exists as a monomer or a dimer and forms supercomplexes (SCs) in the inner mitochondrial membrane with NADH-ubiquinone oxidoreductase (complex I, CI) and ubiquinol-cytochrome c oxidoreductase (cytochrome b-c1 complex, complex III, CIII), resulting in different assemblies (supercomplex SCI(1)III(2)IV(1) and megacomplex MCI(2)III(2)IV(2)).

It localises to the mitochondrion inner membrane. The protein operates within energy metabolism; oxidative phosphorylation. In terms of biological role, component of the cytochrome c oxidase, the last enzyme in the mitochondrial electron transport chain which drives oxidative phosphorylation. The respiratory chain contains 3 multisubunit complexes succinate dehydrogenase (complex II, CII), ubiquinol-cytochrome c oxidoreductase (cytochrome b-c1 complex, complex III, CIII) and cytochrome c oxidase (complex IV, CIV), that cooperate to transfer electrons derived from NADH and succinate to molecular oxygen, creating an electrochemical gradient over the inner membrane that drives transmembrane transport and the ATP synthase. Cytochrome c oxidase is the component of the respiratory chain that catalyzes the reduction of oxygen to water. Electrons originating from reduced cytochrome c in the intermembrane space (IMS) are transferred via the dinuclear copper A center (CU(A)) of subunit 2 and heme A of subunit 1 to the active site in subunit 1, a binuclear center (BNC) formed by heme A3 and copper B (CU(B)). The BNC reduces molecular oxygen to 2 water molecules using 4 electrons from cytochrome c in the IMS and 4 protons from the mitochondrial matrix. The sequence is that of Cytochrome c oxidase subunit 6B1 (COX6B1) from Bos taurus (Bovine).